The primary structure comprises 103 residues: MYAVIQSGGKQHRVAVEQTLRLEKLDVEAGETIEFDKVLLVANAEDVKVGIPYVEGSKVTAEVVAHGRGNKIKIVKFRRRKHSRTTAGHRQWFTEVKITAINA.

It belongs to the bacterial ribosomal protein bL21 family. In terms of assembly, part of the 50S ribosomal subunit. Contacts protein L20.

Its function is as follows. This protein binds to 23S rRNA in the presence of protein L20. The sequence is that of Large ribosomal subunit protein bL21 from Psychromonas ingrahamii (strain DSM 17664 / CCUG 51855 / 37).